A 93-amino-acid polypeptide reads, in one-letter code: Small ribosomal subunit protein uS19 (93 aa).

It belongs to the universal ribosomal protein uS19 family.

Functionally, protein S19 forms a complex with S13 that binds strongly to the 16S ribosomal RNA. The polypeptide is Small ribosomal subunit protein uS19 (Leifsonia xyli subsp. xyli (strain CTCB07)).